The chain runs to 339 residues: Phenylalanine--tRNA ligase alpha subunit (339 aa).

Glu-253 is a Mg(2+) binding site.

It belongs to the class-II aminoacyl-tRNA synthetase family. Phe-tRNA synthetase alpha subunit type 1 subfamily. Tetramer of two alpha and two beta subunits. Requires Mg(2+) as cofactor.

It localises to the cytoplasm. The catalysed reaction is tRNA(Phe) + L-phenylalanine + ATP = L-phenylalanyl-tRNA(Phe) + AMP + diphosphate + H(+). The protein is Phenylalanine--tRNA ligase alpha subunit of Chromohalobacter salexigens (strain ATCC BAA-138 / DSM 3043 / CIP 106854 / NCIMB 13768 / 1H11).